We begin with the raw amino-acid sequence, 542 residues long: MSRQSLTKAHAKISELTWEPTFATPATRFGTDYTFEKAPKKDPLKQIMRSYFSMEEEKDNRVYGAMDGAIRGNMFRQVQQRWLEWQKLFLSIIPFPEISAARAMPMAIDAVPNPEIHNGLAVQMIDEVRHSTIQMNLKKLYMNNYIDPAGFDMTEKAFANNYAGTIGRQFGEGFITGDAITAANIYLTVVAETAFTNTLFVAMPDEAAANGDYLLPTVFHSVQSDESRHISNGYSILLMALADERNRPLLERDLRYAWWNNHCVVDAAIGTFIEYGTKDRRKDRESYAEMWRRWIYDDYYRSYLLPLEKYGLTIPHDLVEEAWKRIVEKGYVHEVARFFATGWPVNYWRIDTMTDTDFEWFEHKYPGWYNKFGKWWENYNRLAYPGRNKPIAFEEVGYQYPHRCWTCMVPALIREDMIVEKVDGQWRTYCSETCYWTDAVAFRGEYEGRATPNMGRLTGFREWETLHHGKDLADIVTDLGYVRDDGKTLVGQPHLDLDPQKMWTLDDVRGNTFNSPNVLLNQMTNDERDAHVAAYRAGGVPA.

Residues glutamate 97, glutamate 127, histidine 130, glutamate 192, glutamate 226, and histidine 229 each coordinate Fe cation.

Belongs to the TmoA/XamoA family. As to quaternary structure, the propane 2-monooxygenase multicomponent enzyme system is composed of an electron transfer component and a monooxygenase component interacting with the effector protein MimD. The electron transfer component is composed of a reductase (MimB), and the monooxygenase component is formed by a large subunit (MimA) and a small subunit (MimC). Requires the presence of the chaperonin-like protein MimG to ensure a productive folding, resulting of a soluble MimA, which leads to the active form of MimABCD. It depends on Fe(2+) as a cofactor.

The enzyme catalyses propane + NADH + O2 + H(+) = propan-2-ol + NAD(+) + H2O. It catalyses the reaction acetone + NADH + O2 + H(+) = hydroxyacetone + NAD(+) + H2O. The catalysed reaction is butan-2-one + NADH + O2 + H(+) = 1-hydroxy-2-butanone + NAD(+) + H2O. It carries out the reaction phenol + NADH + O2 + H(+) = hydroquinone + NAD(+) + H2O. Its function is as follows. Component of the propane 2-monooxygenase multicomponent enzyme system which is involved in the degradation of propane via the O2-dependent hydroxylation of propane. Also involved in the degradation of acetone via the O2-dependent hydroxylation of acetone. Also able to catalyze the oxidation of phenol, methylethylketone (2-butanone), 1-propanol and 2-propanol. In Mycolicibacterium goodii (Mycobacterium goodii), this protein is Propane 2-monooxygenase, hydroxylase component large subunit.